The primary structure comprises 393 residues: Formate-dependent phosphoribosylglycinamide formyltransferase (393 aa).

N(1)-(5-phospho-beta-D-ribosyl)glycinamide-binding positions include 22–23 and Glu-82; that span reads EL. Residues Arg-114, Lys-155, 160–165, 195–198, and Glu-203 contribute to the ATP site; these read SSGKGQ and EGFI. Positions 119 to 308 constitute an ATP-grasp domain; sequence RLAAEELDLP…QFALHARAIL (190 aa). Mg(2+) is bound by residues Glu-267 and Glu-279. Residues Asp-286, Lys-356, and 363-364 each bind N(1)-(5-phospho-beta-D-ribosyl)glycinamide; that span reads RR.

This sequence belongs to the PurK/PurT family. As to quaternary structure, homodimer.

The enzyme catalyses N(1)-(5-phospho-beta-D-ribosyl)glycinamide + formate + ATP = N(2)-formyl-N(1)-(5-phospho-beta-D-ribosyl)glycinamide + ADP + phosphate + H(+). The protein operates within purine metabolism; IMP biosynthesis via de novo pathway; N(2)-formyl-N(1)-(5-phospho-D-ribosyl)glycinamide from N(1)-(5-phospho-D-ribosyl)glycinamide (formate route): step 1/1. Functionally, involved in the de novo purine biosynthesis. Catalyzes the transfer of formate to 5-phospho-ribosyl-glycinamide (GAR), producing 5-phospho-ribosyl-N-formylglycinamide (FGAR). Formate is provided by PurU via hydrolysis of 10-formyl-tetrahydrofolate. The polypeptide is Formate-dependent phosphoribosylglycinamide formyltransferase (Pseudomonas fluorescens (strain Pf0-1)).